The following is a 266-amino-acid chain: Integral membrane protein 2B (266 aa).

Residues 1-54 lie on the Cytoplasmic side of the membrane; it reads MVKVTFNSALAQKEAKKDEPKSSEEALIVPPDAVAVDCKDPGDVVPVGQRRAWC. The chain crosses the membrane as a helical; Signal-anchor for type II membrane protein span at residues 55-75; the sequence is WCMCFGLAFMLAGVILGGAYL. Residues 76 to 266 are Lumenal-facing; it reads YKYFALQPDD…KFAVETLICS (191 aa). The necessary for interaction with APP and inhibitor effects on APP processing stretch occupies residues 102–134; that stretch reads EPSADAPAARYQTIEENIKIFEEDAVEFISVPV. A BRICHOS domain is found at 137 to 231; the sequence is FADSDPANIV…LCHDKETYKL (95 aa). 2 cysteine pairs are disulfide-bonded: Cys-164–Cys-223 and Cys-248–Cys-265. The N-linked (GlcNAc...) asparagine glycan is linked to Asn-170.

Belongs to the ITM2 family. As to quaternary structure, homodimer; disulfide-linked. Interacts with SPPL2A and SPPL2B. Interacts with APP. Mature BRI2 (mBRI2) interacts with the APP amyloid-beta A4 protein; the interaction occurs at the cell surface and in the endocytic compartments and enable alpha- and beta-secretase-induced APP cleavage inhibition. Mature BRI2 (mBRI2) interacts with the APP C99; the interaction occurs in the endocytic compartments and enable gamma-secretase-induced C99 cleavage inhibition. May form heterodimers with Bri23 peptide and APP amyloid-beta protein 40. Interacts with ADAM7 in sperm; the interaction increases following capacitation. The ectodomain C-terminal part of the imBRI2 is processed by furin producing a secreted Bri23 peptide and a mature BRI2, membrane form (mBRI2). The remaining part of the ectodomain of mBRI2 containing the BRICHOS domain is cleaved by ADAM10 and is secreted (BRI2C, soluble form). The membrane-bound N-terminal fragment (BRI2C, membrane form) is further proteolytically processed by SPPL2A and SPPL2B through regulated intramembrane proteolysis producing a secreted C-peptide and a BRI2 intracellular domain (BRI2 ICD) released in the cytosol. Shedding by ADAM10 facilitates intramembrane cleavage but is not absolutely required for BRI2 ICD generation. In terms of processing, glycosylation at Asn-170 is important for cell surface localization, but doesn't affect furin- and ADAM10-induced proteolytic processing. Expressed in the brain, testis, testicular sperm, epididymis and mature epididymal sperm (at protein level).

It is found in the golgi apparatus membrane. The protein localises to the cell membrane. Its subcellular location is the endosome membrane. The protein resides in the secreted. Functionally, plays a regulatory role in the processing of the amyloid-beta A4 precursor protein (APP) and acts as an inhibitor of the amyloid-beta peptide aggregation and fibrils deposition. Plays a role in the induction of neurite outgrowth. Functions as a protease inhibitor by blocking access of secretases to APP cleavage sites. Mature BRI2 (mBRI2) functions as a modulator of the amyloid-beta A4 precursor protein (APP) processing leading to a strong reduction in the secretion of secretase-processed amyloid-beta protein 40 and amyloid-beta protein 42. Its function is as follows. Bri23 peptide prevents aggregation of APP amyloid-beta protein 42 into toxic oligomers. This is Integral membrane protein 2B (Itm2b) from Mus musculus (Mouse).